Here is a 719-residue protein sequence, read N- to C-terminus: Glycine--tRNA ligase beta subunit (719 aa).

The tract at residues 65-84 (PDREEEIKGPPAKAAFKDGK) is disordered.

It belongs to the class-II aminoacyl-tRNA synthetase family. As to quaternary structure, tetramer of two alpha and two beta subunits.

It is found in the cytoplasm. The enzyme catalyses tRNA(Gly) + glycine + ATP = glycyl-tRNA(Gly) + AMP + diphosphate. This is Glycine--tRNA ligase beta subunit from Trichodesmium erythraeum (strain IMS101).